Reading from the N-terminus, the 456-residue chain is Glutamate--tRNA ligase 1 (456 aa).

A 'HIGH' region motif is present at residues 9–19 (PSPTGQIHIGN). Positions 250–254 (GLSKR) match the 'KMSKS' region motif. K253 provides a ligand contact to ATP.

Belongs to the class-I aminoacyl-tRNA synthetase family. Glutamate--tRNA ligase type 1 subfamily. In terms of assembly, monomer.

It localises to the cytoplasm. The catalysed reaction is tRNA(Glu) + L-glutamate + ATP = L-glutamyl-tRNA(Glu) + AMP + diphosphate. Catalyzes the attachment of glutamate to tRNA(Glu) in a two-step reaction: glutamate is first activated by ATP to form Glu-AMP and then transferred to the acceptor end of tRNA(Glu). The chain is Glutamate--tRNA ligase 1 from Chelativorans sp. (strain BNC1).